The chain runs to 179 residues: NADH dehydrogenase [ubiquinone] 1 beta subcomplex subunit 9 (179 aa).

Ala-2 carries the N-acetylalanine modification. Ser-85 carries the post-translational modification Phosphoserine. The segment at 136 to 162 is disordered; the sequence is EVKQLQEETPPGGPLTEALPPARKEGD.

It belongs to the complex I LYR family. In terms of assembly, mammalian complex I is composed of 45 different subunits.

It is found in the mitochondrion inner membrane. Its function is as follows. Accessory subunit of the mitochondrial membrane respiratory chain NADH dehydrogenase (Complex I), that is believed to be not involved in catalysis. Complex I functions in the transfer of electrons from NADH to the respiratory chain. The immediate electron acceptor for the enzyme is believed to be ubiquinone. The protein is NADH dehydrogenase [ubiquinone] 1 beta subcomplex subunit 9 (NDUFB9) of Pan troglodytes (Chimpanzee).